The sequence spans 456 residues: Bifunctional protein GlmU (456 aa).

Residues 1-229 (MTKKALSAVI…VMEVEGANNR (229 aa)) form a pyrophosphorylase region. Residues 11–14 (LAAG), K25, Q76, 81–82 (GT), 103–105 (YGD), G140, E154, N169, and N227 each bind UDP-N-acetyl-alpha-D-glucosamine. Position 105 (D105) interacts with Mg(2+). N227 serves as a coordination point for Mg(2+). Residues 230–250 (LQLAALERYLQNKQASKLLLE) are linker. The tract at residues 251–456 (GVMIYDPARF…QGWQRPIKKK (206 aa)) is N-acetyltransferase. Positions 333 and 351 each coordinate UDP-N-acetyl-alpha-D-glucosamine. Residue H363 is the Proton acceptor of the active site. Residues Y366 and N377 each coordinate UDP-N-acetyl-alpha-D-glucosamine. Acetyl-CoA-binding positions include A380, 386–387 (NY), S405, A423, and R440.

In the N-terminal section; belongs to the N-acetylglucosamine-1-phosphate uridyltransferase family. This sequence in the C-terminal section; belongs to the transferase hexapeptide repeat family. As to quaternary structure, homotrimer. The cofactor is Mg(2+).

The protein resides in the cytoplasm. It carries out the reaction alpha-D-glucosamine 1-phosphate + acetyl-CoA = N-acetyl-alpha-D-glucosamine 1-phosphate + CoA + H(+). It catalyses the reaction N-acetyl-alpha-D-glucosamine 1-phosphate + UTP + H(+) = UDP-N-acetyl-alpha-D-glucosamine + diphosphate. Its pathway is nucleotide-sugar biosynthesis; UDP-N-acetyl-alpha-D-glucosamine biosynthesis; N-acetyl-alpha-D-glucosamine 1-phosphate from alpha-D-glucosamine 6-phosphate (route II): step 2/2. The protein operates within nucleotide-sugar biosynthesis; UDP-N-acetyl-alpha-D-glucosamine biosynthesis; UDP-N-acetyl-alpha-D-glucosamine from N-acetyl-alpha-D-glucosamine 1-phosphate: step 1/1. It functions in the pathway bacterial outer membrane biogenesis; LPS lipid A biosynthesis. In terms of biological role, catalyzes the last two sequential reactions in the de novo biosynthetic pathway for UDP-N-acetylglucosamine (UDP-GlcNAc). The C-terminal domain catalyzes the transfer of acetyl group from acetyl coenzyme A to glucosamine-1-phosphate (GlcN-1-P) to produce N-acetylglucosamine-1-phosphate (GlcNAc-1-P), which is converted into UDP-GlcNAc by the transfer of uridine 5-monophosphate (from uridine 5-triphosphate), a reaction catalyzed by the N-terminal domain. In Haemophilus influenzae (strain PittEE), this protein is Bifunctional protein GlmU.